The chain runs to 751 residues: Trehalose phosphorylase (751 aa).

A propeptide spanning residues 1-26 (MSTPHHQFESKSSTAIRRRLSSSVSS) is cleaved from the precursor. A disordered region spans residues 1 to 28 (MSTPHHQFESKSSTAIRRRLSSSVSSKQ).

The protein belongs to the glycosyltransferase group 1 family. Glycosyltransferase 4 subfamily. Homodimer. In terms of tissue distribution, expressed in mycelia, stipes and pilei.

The catalysed reaction is alpha,alpha-trehalose + phosphate = alpha-D-glucose + alpha-D-glucose 1-phosphate. Reversibly catalyzes the synthesis and degradation of trehalose from glucose and alpha-D-glucose 1-phosphate. The equilibrium lies in the direction of trehalose synthesis. In Pleurotus sajor-caju (Oyster mushroom), this protein is Trehalose phosphorylase.